Reading from the N-terminus, the 264-residue chain is Stress response regulator protein 1 (264 aa).

Residues 50 to 74 (IYSDCDNNKNNNDDDDDDDDYNKDT) are disordered. A compositionally biased stretch (acidic residues) spans 62–74 (DDDDDDDDYNKDT). A Response regulatory domain is found at 138 to 256 (RFLIVDDNII…LDLIGGSIDD (119 aa)). At Asp-189 the chain carries 4-aspartylphosphate.

In terms of biological role, required for stress adaptation, morphogenesis and virulence. The polypeptide is Stress response regulator protein 1 (SRR1) (Candida tropicalis (strain ATCC MYA-3404 / T1) (Yeast)).